The sequence spans 311 residues: Formimidoylglutamase (311 aa).

Residues His130, Asp155, His157, Asp159, Cys242, and Asp244 each contribute to the Mn(2+) site.

The protein belongs to the arginase family. The cofactor is Mn(2+).

The enzyme catalyses N-formimidoyl-L-glutamate + H2O = formamide + L-glutamate. It participates in amino-acid degradation; L-histidine degradation into L-glutamate; L-glutamate from N-formimidoyl-L-glutamate (hydrolase route): step 1/1. In terms of biological role, catalyzes the conversion of N-formimidoyl-L-glutamate to L-glutamate and formamide. This is Formimidoylglutamase from Staphylococcus epidermidis (strain ATCC 35984 / DSM 28319 / BCRC 17069 / CCUG 31568 / BM 3577 / RP62A).